The chain runs to 356 residues: 3'-5' exonuclease (356 aa).

The disordered stretch occupies residues 1–120; the sequence is MDKYLIKMPT…TPSPEKEKPE (120 aa). 2 stretches are compositionally biased toward basic and acidic residues: residues 29–56 and 71–85; these read TIDK…ENTP and KNQD…IKNE. The span at 99–113 shows a compositional bias: low complexity; it reads LTRSTRSMAEEGTPS. A phosphoserine mark is found at serine 105 and serine 113. A 3'-5' exonuclease domain is found at 155-316; that stretch reads TTLDVVPMAF…GQVIYRDLEQ (162 aa). Mg(2+) is bound by residues aspartate 165, glutamate 167, and aspartate 303.

It belongs to the WRNexo family.

It localises to the nucleus. Has exonuclease activity on both single-stranded and duplex templates bearing overhangs, but not blunt ended duplex DNA, and cleaves in a 3'-5' direction. Essential for the formation of DNA replication focal centers. Has an important role in maintaining genome stability. The polypeptide is 3'-5' exonuclease (Drosophila willistoni (Fruit fly)).